Consider the following 272-residue polypeptide: uncharacterized protein (272 aa).

Residues 12-34, 39-40, 77-78, and asparagine 104 each bind NAD(+); these read FITGAARGLGRAHAVRLAADGAN, DI, and DV. Residue serine 153 participates in substrate binding. Catalysis depends on tyrosine 170, which acts as the Proton acceptor. Residues lysine 174 and 203 to 205 contribute to the NAD(+) site; that span reads VDT.

The protein belongs to the short-chain dehydrogenases/reductases (SDR) family.

This is an uncharacterized protein from Mycobacterium tuberculosis (strain CDC 1551 / Oshkosh).